Here is a 226-residue protein sequence, read N- to C-terminus: Urease accessory protein UreF (226 aa).

Belongs to the UreF family. As to quaternary structure, ureD, UreF and UreG form a complex that acts as a GTP-hydrolysis-dependent molecular chaperone, activating the urease apoprotein by helping to assemble the nickel containing metallocenter of UreC. The UreE protein probably delivers the nickel.

It is found in the cytoplasm. Its function is as follows. Required for maturation of urease via the functional incorporation of the urease nickel metallocenter. This is Urease accessory protein UreF from Burkholderia lata (strain ATCC 17760 / DSM 23089 / LMG 22485 / NCIMB 9086 / R18194 / 383).